We begin with the raw amino-acid sequence, 51 residues long: Cytochrome b559 subunit beta (51 aa).

A helical membrane pass occupies residues 26–42 (WLAVHALAVPTVFFIGS). His-30 provides a ligand contact to heme.

It belongs to the PsbE/PsbF family. Heterodimer of an alpha subunit and a beta subunit. PSII is composed of 1 copy each of membrane proteins PsbA, PsbB, PsbC, PsbD, PsbE, PsbF, PsbH, PsbI, PsbJ, PsbK, PsbL, PsbM, PsbT, PsbY, PsbZ, Psb30/Ycf12, at least 3 peripheral proteins of the oxygen-evolving complex and a large number of cofactors. It forms dimeric complexes. The cofactor is heme b.

It is found in the plastid. It localises to the chloroplast thylakoid membrane. In terms of biological role, this b-type cytochrome is tightly associated with the reaction center of photosystem II (PSII). PSII is a light-driven water:plastoquinone oxidoreductase that uses light energy to abstract electrons from H(2)O, generating O(2) and a proton gradient subsequently used for ATP formation. It consists of a core antenna complex that captures photons, and an electron transfer chain that converts photonic excitation into a charge separation. The protein is Cytochrome b559 subunit beta of Bigelowiella natans (Pedinomonas minutissima).